Here is a 288-residue protein sequence, read N- to C-terminus: Nucleotide-binding protein Mlg_2233 (288 aa).

11–18 (GLSGSGKS) contributes to the ATP binding site. 63–66 (DARN) provides a ligand contact to GTP.

It belongs to the RapZ-like family.

Its function is as follows. Displays ATPase and GTPase activities. This chain is Nucleotide-binding protein Mlg_2233, found in Alkalilimnicola ehrlichii (strain ATCC BAA-1101 / DSM 17681 / MLHE-1).